A 104-amino-acid chain; its full sequence is Iron-sulfur cluster assembly protein CyaY (104 aa).

Belongs to the frataxin family.

In terms of biological role, involved in iron-sulfur (Fe-S) cluster assembly. May act as a regulator of Fe-S biogenesis. This chain is Iron-sulfur cluster assembly protein CyaY, found in Rickettsia prowazekii (strain Madrid E).